The chain runs to 168 residues: N-alpha-acetyltransferase 50 (168 aa).

An N-acetyltransferase domain is found at 5-154 (IELGDVTPHN…DAHVLQKSLR (150 aa)). A substrate-binding site is contributed by Y30. Y72 is a catalytic residue. M74 is a binding site for substrate. 76-89 (LGCLAPYRRLGIGT) contributes to the acetyl-CoA binding site. The active site involves H111. 116-125 (NESAIDFYQK) provides a ligand contact to CoA. The tract at residues 137-140 (YYKR) is substrate.

It belongs to the acetyltransferase family. GNAT subfamily. Interacts with naa35.

The protein localises to the cytoplasm. It localises to the nucleus. The enzyme catalyses N-terminal L-methionyl-L-alanyl-[protein] + acetyl-CoA = N-terminal N(alpha)-acetyl-L-methionyl-L-alanyl-[protein] + CoA + H(+). It carries out the reaction N-terminal L-methionyl-L-seryl-[protein] + acetyl-CoA = N-terminal N(alpha)-acetyl-L-methionyl-L-seryl-[protein] + CoA + H(+). The catalysed reaction is N-terminal L-methionyl-L-valyl-[protein] + acetyl-CoA = N-terminal N(alpha)-acetyl-L-methionyl-L-valyl-[protein] + CoA + H(+). It catalyses the reaction N-terminal L-methionyl-L-threonyl-[protein] + acetyl-CoA = N-terminal N(alpha)-acetyl-L-methionyl-L-threonyl-[protein] + CoA + H(+). The enzyme catalyses N-terminal L-methionyl-L-lysyl-[protein] + acetyl-CoA = N-terminal N(alpha)-acetyl-L-methionyl-L-lysyl-[protein] + CoA + H(+). It carries out the reaction N-terminal L-methionyl-L-leucyl-[protein] + acetyl-CoA = N-terminal N(alpha)-acetyl-L-methionyl-L-leucyl-[protein] + CoA + H(+). The catalysed reaction is N-terminal L-methionyl-L-phenylalanyl-[protein] + acetyl-CoA = N-terminal N(alpha)-acetyl-L-methionyl-L-phenylalanyl-[protein] + CoA + H(+). It catalyses the reaction N-terminal L-methionyl-L-tyrosyl-[protein] + acetyl-CoA = N-terminal N(alpha)-acetyl-L-methionyl-L-tyrosyl-[protein] + CoA + H(+). Functionally, N-alpha-acetyltransferase that acetylates the N-terminus of proteins that retain their initiating methionine. Has a broad substrate specificity: able to acetylate the initiator methionine of most peptides, except for those with a proline in second position. Also displays N-epsilon-acetyltransferase activity by mediating acetylation of the side chain of specific lysines on proteins. The relevance of N-epsilon-acetyltransferase activity is however unclear. Required for sister chromatid cohesion during mitosis by promoting binding of CDCA5/sororin to cohesin. Essential in embryonic cell proliferation and survival. In Danio rerio (Zebrafish), this protein is N-alpha-acetyltransferase 50 (naa50).